We begin with the raw amino-acid sequence, 452 residues long: Cell division protein FtsZ (452 aa).

GTP contacts are provided by residues 24–28 (GAGSN), 111–113 (GTG), Glu-142, Arg-146, and Asp-190. Residues 432-452 (DQDNKESDIHDIPAFLRKKRD) are disordered. The segment covering 433-442 (QDNKESDIHD) has biased composition (basic and acidic residues).

This sequence belongs to the FtsZ family. In terms of assembly, homodimer. Polymerizes to form a dynamic ring structure in a strictly GTP-dependent manner. Interacts directly with several other division proteins.

The protein resides in the cytoplasm. Its function is as follows. Essential cell division protein that forms a contractile ring structure (Z ring) at the future cell division site. The regulation of the ring assembly controls the timing and the location of cell division. One of the functions of the FtsZ ring is to recruit other cell division proteins to the septum to produce a new cell wall between the dividing cells. Binds GTP and shows GTPase activity. The polypeptide is Cell division protein FtsZ (Rickettsia conorii (strain ATCC VR-613 / Malish 7)).